The following is a 266-amino-acid chain: Agamous-like MADS-box protein AGL97 (266 aa).

The 61-residue stretch at 3-63 (GVKRKIAIEK…SNSNAAFYSF (61 aa)) folds into the MADS-box domain. Residues 88–130 (WEDESLLKSENLEELREAMDSMSTMLRDLKELEKQRDHQTQTL) are a coiled coil.

As to quaternary structure, interacts with AGL27 and AGL62.

Its subcellular location is the nucleus. Functionally, putative transcription factor. This chain is Agamous-like MADS-box protein AGL97 (AGL97), found in Arabidopsis thaliana (Mouse-ear cress).